The chain runs to 365 residues: BTB/POZ and TAZ domain-containing protein 1 (365 aa).

The 72-residue stretch at 25 to 96 (TDVEIITSGR…LYSPSVTENE (72 aa)) folds into the BTB domain. A Nuclear localization signal motif is present at residues 193-202 (RKKRRRRHRR). The segment at 205–304 (NLYLQLSEAM…SESCRVPLCR (100 aa)) adopts a TAZ-type zinc-finger fold. The segment at 315-338 (KMVEDTKWKVLVRRVASAKAMSSL) is caM-binding.

Interacts with CUL3A. Interacts with GTE9/BET9 and GTE11/BET10 through the BTB domain. Preferentially expressed in young leaves, roots and stems.

Its subcellular location is the nucleus. It is found in the cytoplasm. Its pathway is protein modification; protein ubiquitination. May act as a substrate-specific adapter of an E3 ubiquitin-protein ligase complex (CUL3-RBX1-BTB) which mediates the ubiquitination and subsequent proteasomal degradation of target proteins. Also targeted for degradation by the 26S proteasome pathway. May be involved in gametophyte development. This chain is BTB/POZ and TAZ domain-containing protein 1 (BT1), found in Arabidopsis thaliana (Mouse-ear cress).